The sequence spans 175 residues: ATP-dependent protease subunit HslV (175 aa).

The active site involves Thr-2. Residues Ala-156, Cys-159, and Thr-162 each coordinate Na(+).

It belongs to the peptidase T1B family. HslV subfamily. In terms of assembly, a double ring-shaped homohexamer of HslV is capped on each side by a ring-shaped HslU homohexamer. The assembly of the HslU/HslV complex is dependent on binding of ATP.

The protein localises to the cytoplasm. It carries out the reaction ATP-dependent cleavage of peptide bonds with broad specificity.. Its activity is regulated as follows. Allosterically activated by HslU binding. Functionally, protease subunit of a proteasome-like degradation complex believed to be a general protein degrading machinery. In Rhizobium etli (strain CIAT 652), this protein is ATP-dependent protease subunit HslV.